Reading from the N-terminus, the 254-residue chain is MTGCTTPGDALLSFEPLEEGVLIKRYKRFLADVELSSGEVITAHCANTGPMTGVLIPGQRVRLRHAPSPKRKLAWTWEQAEVPGADGAPCWVGINTALPNRLIRATIEAGCLAAQLGPIASIRAEVAYGANKRSRIDLLLTPTDSNPDQRPIYLEVKNTTWTDGTTALFPDTVTERGQKHLVELMGVLPDSRAVLVPCLSRPDVTEFAPGDSADPRYGELFREAIKAGVEVLPCRFRFQADGIRWEGIRPLKQL.

Belongs to the SfsA family.

This chain is Sugar fermentation stimulation protein homolog, found in Parasynechococcus marenigrum (strain WH8102).